The following is a 545-amino-acid chain: Glucose-6-phosphate isomerase (545 aa).

Glutamate 351 acts as the Proton donor in catalysis. Residues histidine 382 and lysine 510 contribute to the active site.

It belongs to the GPI family.

It is found in the cytoplasm. The catalysed reaction is alpha-D-glucose 6-phosphate = beta-D-fructose 6-phosphate. It functions in the pathway carbohydrate biosynthesis; gluconeogenesis. Its pathway is carbohydrate degradation; glycolysis; D-glyceraldehyde 3-phosphate and glycerone phosphate from D-glucose: step 2/4. In terms of biological role, catalyzes the reversible isomerization of glucose-6-phosphate to fructose-6-phosphate. The sequence is that of Glucose-6-phosphate isomerase from Shewanella sp. (strain MR-4).